Reading from the N-terminus, the 210-residue chain is UPF0173 protein PF0020 (210 aa).

This sequence belongs to the UPF0173 family.

This chain is UPF0173 protein PF0020, found in Pyrococcus furiosus (strain ATCC 43587 / DSM 3638 / JCM 8422 / Vc1).